A 376-amino-acid polypeptide reads, in one-letter code: Natterin-2 (376 aa).

The N-terminal stretch at 1–18 is a signal peptide; that stretch reads MNLSVLLVTLLLLSWTSA. The propeptide occupies 19–27; it reads EKDLKVRVA.

The protein belongs to the natterin family. Contains 4 disulfide bonds. As to expression, expressed by the venom gland.

It localises to the secreted. Its activity is regulated as follows. Inhibited by tissue-kallikrein inhibitor TKI and trasylol. Plasma kallikrein inhibitor PKSI527 and classical inhibitors of serine-, metallo-, thiol- or aspartate-peptidases evokes a minor inhibition of the peptide digestion. In terms of biological role, shows nociceptive, edema-inducing and kininogenase activity with release of kallidin from low molecular weight kininogen. The cleavage occurs at Met-Lys bonds. This chain is Natterin-2, found in Thalassophryne nattereri (Copper Joe toadfish).